We begin with the raw amino-acid sequence, 438 residues long: GDP-mannose 6-dehydrogenase (438 aa).

NAD(+) contacts are provided by tyrosine 10, valine 11, aspartate 30, lysine 35, threonine 86, and threonine 124. Positions 161, 210, 214, 217, 225, 256, 257, 259, 262, and 265 each coordinate GDP-alpha-D-mannuronate. The active site involves cysteine 268. Position 271 (lysine 271) interacts with NAD(+). Residue lysine 324 participates in GDP-alpha-D-mannuronate binding. An NAD(+)-binding site is contributed by arginine 331.

This sequence belongs to the UDP-glucose/GDP-mannose dehydrogenase family.

It carries out the reaction GDP-alpha-D-mannose + 2 NAD(+) + H2O = GDP-alpha-D-mannuronate + 2 NADH + 3 H(+). Its pathway is glycan biosynthesis; alginate biosynthesis. In terms of biological role, catalyzes the oxidation of guanosine diphospho-D-mannose (GDP-D-mannose) to GDP-D-mannuronic acid, a precursor for alginate polymerization. The alginate layer causes a mucoid phenotype and provides a protective barrier against host immune defenses and antibiotics. The sequence is that of GDP-mannose 6-dehydrogenase (algD) from Pseudomonas syringae pv. syringae.